A 353-amino-acid chain; its full sequence is Probable WRKY transcription factor 7 (353 aa).

The tract at residues 117–259 is disordered; it reads VEEKKPETSS…SSRCHCSKKR (143 aa). A compositionally biased stretch (low complexity) spans 158 to 176; sequence SHNNNNNQNQTKNGSSSSS. 2 stretches are compositionally biased toward polar residues: residues 184–204 and 213–229; these read APSTINFAPSPPVSATNSFMS and THMSSGFEFTNPSQLSG. The segment at residues 275-341 is a DNA-binding region (WRKY); the sequence is KMADIPSDEF…YEGDHNHALV (67 aa).

The protein belongs to the WRKY group II-d family. In terms of tissue distribution, in young, mature and senescent leaves.

The protein localises to the nucleus. Functionally, transcription factor. Interacts specifically with the W box (5'-(T)TGAC[CT]-3'), a frequently occurring elicitor-responsive cis-acting element. The chain is Probable WRKY transcription factor 7 (WRKY7) from Arabidopsis thaliana (Mouse-ear cress).